We begin with the raw amino-acid sequence, 284 residues long: Diaminopimelate epimerase (284 aa).

Substrate contacts are provided by Asn21, Gln54, and Asn74. Cys83 acts as the Proton donor in catalysis. Residues 84 to 85, Asn167, Asn200, and 218 to 219 contribute to the substrate site; these read GN and ER. The active-site Proton acceptor is the Cys227. 228-229 serves as a coordination point for substrate; that stretch reads GS.

Belongs to the diaminopimelate epimerase family. In terms of assembly, homodimer.

It is found in the cytoplasm. The enzyme catalyses (2S,6S)-2,6-diaminopimelate = meso-2,6-diaminopimelate. The protein operates within amino-acid biosynthesis; L-lysine biosynthesis via DAP pathway; DL-2,6-diaminopimelate from LL-2,6-diaminopimelate: step 1/1. In terms of biological role, catalyzes the stereoinversion of LL-2,6-diaminopimelate (L,L-DAP) to meso-diaminopimelate (meso-DAP), a precursor of L-lysine and an essential component of the bacterial peptidoglycan. The protein is Diaminopimelate epimerase of Buchnera aphidicola subsp. Acyrthosiphon pisum (strain 5A).